A 116-amino-acid polypeptide reads, in one-letter code: Large ribosomal subunit protein bL19 (116 aa).

Belongs to the bacterial ribosomal protein bL19 family.

Its function is as follows. This protein is located at the 30S-50S ribosomal subunit interface and may play a role in the structure and function of the aminoacyl-tRNA binding site. The sequence is that of Large ribosomal subunit protein bL19 from Streptomyces avermitilis (strain ATCC 31267 / DSM 46492 / JCM 5070 / NBRC 14893 / NCIMB 12804 / NRRL 8165 / MA-4680).